We begin with the raw amino-acid sequence, 302 residues long: 33 kDa chaperonin (302 aa).

Intrachain disulfides connect cysteine 255-cysteine 257 and cysteine 288-cysteine 291.

The protein belongs to the HSP33 family. Under oxidizing conditions two disulfide bonds are formed involving the reactive cysteines. Under reducing conditions zinc is bound to the reactive cysteines and the protein is inactive.

Its subcellular location is the cytoplasm. Redox regulated molecular chaperone. Protects both thermally unfolding and oxidatively damaged proteins from irreversible aggregation. Plays an important role in the bacterial defense system toward oxidative stress. This Caulobacter vibrioides (strain ATCC 19089 / CIP 103742 / CB 15) (Caulobacter crescentus) protein is 33 kDa chaperonin.